A 427-amino-acid polypeptide reads, in one-letter code: 3-phosphoshikimate 1-carboxyvinyltransferase (427 aa).

3-phosphoshikimate contacts are provided by Lys-22, Ser-23, and Arg-27. Lys-22 lines the phosphoenolpyruvate pocket. Phosphoenolpyruvate contacts are provided by Gly-96 and Arg-124. The 3-phosphoshikimate site is built by Ser-169, Ser-170, Gln-171, Ser-197, Asp-313, Asn-336, and Lys-340. Gln-171 is a phosphoenolpyruvate binding site. The active-site Proton acceptor is Asp-313. Phosphoenolpyruvate is bound by residues Arg-344, Arg-386, and Lys-411.

The protein belongs to the EPSP synthase family. Monomer.

It is found in the cytoplasm. It catalyses the reaction 3-phosphoshikimate + phosphoenolpyruvate = 5-O-(1-carboxyvinyl)-3-phosphoshikimate + phosphate. It participates in metabolic intermediate biosynthesis; chorismate biosynthesis; chorismate from D-erythrose 4-phosphate and phosphoenolpyruvate: step 6/7. Its function is as follows. Catalyzes the transfer of the enolpyruvyl moiety of phosphoenolpyruvate (PEP) to the 5-hydroxyl of shikimate-3-phosphate (S3P) to produce enolpyruvyl shikimate-3-phosphate and inorganic phosphate. In Klebsiella pneumoniae subsp. pneumoniae (strain ATCC 700721 / MGH 78578), this protein is 3-phosphoshikimate 1-carboxyvinyltransferase.